Here is a 63-residue protein sequence, read N- to C-terminus: Large ribosomal subunit protein bL28 (63 aa).

Belongs to the bacterial ribosomal protein bL28 family.

The chain is Large ribosomal subunit protein bL28 from Citrifermentans bemidjiense (strain ATCC BAA-1014 / DSM 16622 / JCM 12645 / Bem) (Geobacter bemidjiensis).